A 272-amino-acid polypeptide reads, in one-letter code: Centromere protein V-like protein 3 (272 aa).

Positions Met-1–Arg-17 are enriched in basic residues. 2 disordered regions span residues Met-1–Ala-23 and Arg-65–Asp-95. Residues Pro-77 to Ala-88 are compositionally biased toward pro residues. In terms of domain architecture, CENP-V/GFA spans His-133–Glu-246. Positions 137, 139, 157, 159, 162, 201, and 204 each coordinate Zn(2+). Positions Gly-240–Gln-272 are disordered.

Belongs to the Gfa family. The cofactor is Zn(2+).

The sequence is that of Centromere protein V-like protein 3 from Homo sapiens (Human).